Reading from the N-terminus, the 474-residue chain is tRNA-2-methylthio-N(6)-dimethylallyladenosine synthase (474 aa).

In terms of domain architecture, MTTase N-terminal spans 3–120 (KKLLIKTWGC…LPEMIKQSQS (118 aa)). The [4Fe-4S] cluster site is built by Cys12, Cys49, Cys83, Cys157, Cys161, and Cys164. Positions 143 to 375 (RAEGATAFVS…QQTVNTQAMR (233 aa)) constitute a Radical SAM core domain. In terms of domain architecture, TRAM spans 378 to 441 (RQMLDTEQRV…ANSLRGELVR (64 aa)).

It belongs to the methylthiotransferase family. MiaB subfamily. As to quaternary structure, monomer. It depends on [4Fe-4S] cluster as a cofactor.

The protein localises to the cytoplasm. The catalysed reaction is N(6)-dimethylallyladenosine(37) in tRNA + (sulfur carrier)-SH + AH2 + 2 S-adenosyl-L-methionine = 2-methylsulfanyl-N(6)-dimethylallyladenosine(37) in tRNA + (sulfur carrier)-H + 5'-deoxyadenosine + L-methionine + A + S-adenosyl-L-homocysteine + 2 H(+). In terms of biological role, catalyzes the methylthiolation of N6-(dimethylallyl)adenosine (i(6)A), leading to the formation of 2-methylthio-N6-(dimethylallyl)adenosine (ms(2)i(6)A) at position 37 in tRNAs that read codons beginning with uridine. The sequence is that of tRNA-2-methylthio-N(6)-dimethylallyladenosine synthase from Vibrio campbellii (strain ATCC BAA-1116).